A 96-amino-acid chain; its full sequence is Co-chaperonin GroES (96 aa).

Belongs to the GroES chaperonin family. In terms of assembly, heptamer of 7 subunits arranged in a ring. Interacts with the chaperonin GroEL.

It is found in the cytoplasm. Functionally, together with the chaperonin GroEL, plays an essential role in assisting protein folding. The GroEL-GroES system forms a nano-cage that allows encapsulation of the non-native substrate proteins and provides a physical environment optimized to promote and accelerate protein folding. GroES binds to the apical surface of the GroEL ring, thereby capping the opening of the GroEL channel. This is Co-chaperonin GroES from Myxococcus xanthus (strain DK1622).